Here is a 655-residue protein sequence, read N- to C-terminus: A-type voltage-gated potassium channel KCND3 (655 aa).

Residues 1–182 (MAAGVAAWLP…FENPHTSTLA (182 aa)) are Cytoplasmic-facing. An interaction with KCNIP1 and KCNIP2 region spans residues 6 to 21 (AAWLPFARAAAIGWMP). An interaction with KCNIP1 region spans residues 70–78 (EKEFFFNED). Positions 104, 110, 131, and 132 each coordinate Zn(2+). A Phosphoserine modification is found at Ser-153. Residues 183-204 (LVFYYVTGFFIAVSVITNVVET) traverse the membrane as a helical segment. Topologically, residues 205–223 (VPCGTVPGSKELPCGERYS) are extracellular. Residues 224-246 (VAFFCLDTACVMIFTVEYLLRLF) traverse the membrane as a helical segment. Residues 247-253 (AAPSRYR) lie on the Cytoplasmic side of the membrane. A helical membrane pass occupies residues 254–277 (FIRSVMSIIDVVAIMPYYIGLVMT). The Extracellular segment spans residues 278 to 283 (NNEDVS). The helical; Voltage-sensor transmembrane segment at 284 to 306 (GAFVTLRVFRVFRIFKFSRHSQG) threads the bilayer. Over 307–318 (LRILGYTLKSCA) the chain is Cytoplasmic. The helical transmembrane segment at 319–343 (SELGFLLFSLTMAIIIFATVMFYAE) threads the bilayer. The Extracellular segment spans residues 344-352 (KGSSASKFT). An intramembrane region (helical) is located at residues 353-366 (SIPASFWYTIVTMT). K(+) contacts are provided by Thr-367, Leu-368, Gly-369, and Tyr-370. The short motif at 367 to 372 (TLGYGD) is the Selectivity filter element. Residues 367-374 (TLGYGDMV) lie within the membrane without spanning it. The helical transmembrane segment at 378–400 (IAGKIFGSICSLSGVLVIALPVP) threads the bilayer. The Cytoplasmic portion of the chain corresponds to 401-655 (VIVSNFSRIY…TSNVVKVSAL (255 aa)). Thr-459 is modified (phosphothreonine). An interaction with KCNIP1 and KCNIP2 region spans residues 470–487 (SLIESQHHHLLHCLEKTT). Residues 472 to 487 (IESQHHHLLHCLEKTT) form a mediates dendritic targeting region. Positions 523-565 (SSMQNYPSTRSPSLSSHSGLTTTCCSRRSKKTTHLPNSNLPAT) are disordered. Low complexity predominate over residues 529–548 (PSTRSPSLSSHSGLTTTCCS). 2 positions are modified to phosphoserine: Ser-569 and Ser-585. Residues 615–655 (ISIPTPPALTPEGESRPPPASPGPNTNIPSITSNVVKVSAL) form a disordered region. The segment covering 637 to 655 (GPNTNIPSITSNVVKVSAL) has biased composition (polar residues).

Belongs to the potassium channel family. D (Shal) (TC 1.A.1.2) subfamily. Kv4.3/KCND3 sub-subfamily. As to quaternary structure, homotetramer. Heterotetramer with KCND2. Associates with the regulatory subunit KCNIP3. Associates with the regulatory subunit KCNIP4. Interacts with KCNE1, KCNE2, SCN1B and KCNAB1 and DLG1. Component of heteromultimeric potassium channels. Identified in potassium channel complexes containing KCND1, KCND2, KCND3, KCNIP1, KCNIP2, KCNIP3, KCNIP4, DPP6 and DPP10. Interacts with KCNIP1; each KCNIP1 monomer interacts with two adjacent KCND3 subunits, through both the N-terminal inactivation ball of a KCND3 subunit and a C-terminal helix from the adjacent KCND3 subunit, clamping them together; this interaction stabilizes the tetrameric form and modulates the channel gating kinetics namely channel activation and inactivation kinetics and rate of recovery from inactivation. Interacts with DPP6; this interaction modulates the channel gating kinetics namely channel activation and inactivation kinetics and rate of recovery from inactivation. Interacts with KCNIP2; each KCNIP2 monomer interacts with two adjacent KCND3 subunits, through both the N-terminal inactivation ball of a KCND3 subunit and a C-terminal helix from the adjacent KCND3 subunit, clamping them together; this interaction modulates the channel gating kinetics. Post-translationally, regulated through phosphorylation at Ser-569 by CaMK2D.

Its subcellular location is the cell membrane. It is found in the sarcolemma. The protein localises to the cell projection. It localises to the dendrite. The enzyme catalyses K(+)(in) = K(+)(out). Pore-forming (alpha) subunit of voltage-gated A-type potassium channels that mediates transmembrane potassium transport in excitable membranes, in brain and heart. In cardiomyocytes, may generate the transient outward potassium current I(To). In neurons, may conduct the transient subthreshold somatodendritic A-type potassium current (ISA). Kinetics properties are characterized by fast activation at subthreshold membrane potentials, rapid inactivation, and quick recovery from inactivation. Channel properties are modulated by interactions with regulatory subunits. Interaction with the regulatory subunits KCNIP1 or KCNIP2 modulates the channel gating kinetics namely channel activation and inactivation kinetics and rate of recovery from inactivation. Likewise, interaction with DPP6 modulates the channel gating kinetics namely channel activation and inactivation kinetics. In Mus musculus (Mouse), this protein is A-type voltage-gated potassium channel KCND3.